A 309-amino-acid chain; its full sequence is Ornithine carbamoyltransferase (309 aa).

Carbamoyl phosphate is bound by residues 57–60 (STRT), glutamine 84, arginine 108, and 135–138 (HPCQ). L-ornithine-binding positions include asparagine 166, aspartate 224, and 228 to 229 (SM). Carbamoyl phosphate-binding positions include 264–265 (CL) and arginine 292.

This sequence belongs to the aspartate/ornithine carbamoyltransferase superfamily. OTCase family.

The protein localises to the cytoplasm. It catalyses the reaction carbamoyl phosphate + L-ornithine = L-citrulline + phosphate + H(+). It participates in amino-acid biosynthesis; L-arginine biosynthesis; L-arginine from L-ornithine and carbamoyl phosphate: step 1/3. Reversibly catalyzes the transfer of the carbamoyl group from carbamoyl phosphate (CP) to the N(epsilon) atom of ornithine (ORN) to produce L-citrulline. The protein is Ornithine carbamoyltransferase of Paracidovorax citrulli (strain AAC00-1) (Acidovorax citrulli).